The chain runs to 137 residues: Large ribosomal subunit protein uL16 (137 aa).

The segment covering M1–Q13 has biased composition (basic residues). A disordered region spans residues M1–T22.

It belongs to the universal ribosomal protein uL16 family. In terms of assembly, part of the 50S ribosomal subunit.

In terms of biological role, binds 23S rRNA and is also seen to make contacts with the A and possibly P site tRNAs. This is Large ribosomal subunit protein uL16 from Azoarcus sp. (strain BH72).